The primary structure comprises 59 residues: U-scoloptoxin(23)-Er2a (59 aa).

This sequence belongs to the scoloptoxin-23 family. Contains 1 disulfide bond. Expressed by the venom gland.

Its subcellular location is the secreted. The protein is U-scoloptoxin(23)-Er2a of Ethmostigmus rubripes (Giant centipede).